The following is a 589-amino-acid chain: Transmembrane 9 superfamily member 5 (589 aa).

The signal sequence occupies residues 1 to 24 (MAQFLLTVLQVLLALTFWIGIGSG). The Lumenal segment spans residues 25 to 227 (SSNHYNAGDH…SFHPISQKIH (203 aa)). Residues 228–248 (FFSFLNSITVVVLLIGLISFL) form a helical membrane-spanning segment. Residues 249-291 (FMRHLKNELRSYSIGDEEERKEAGWKLVHSDVFRCPRNISWLC) lie on the Cytoplasmic side of the membrane. Residues 292–312 (AILGTGTQLLILIIALFALAF) form a helical membrane-spanning segment. Topologically, residues 313–321 (TGFLYPYNR) are lumenal. A helical membrane pass occupies residues 322 to 342 (GMLLTSLVIMYTLTSIVAGYT). Over 343 to 361 (STSFHSQFEGNKQKRSVRL) the chain is Cytoplasmic. The chain crosses the membrane as a helical span at residues 362–382 (AGILYPVPFFIILSVLNTVAI). The Lumenal portion of the chain corresponds to 383–394 (TYGATAALPFGT). A helical transmembrane segment spans residues 395-415 (IVIIILIFTLLNIPFLMLGGV). Residues 416-450 (LGNRFGLLEFQPPSAVKRNPREIPPQNWYRRKLYQ) lie on the Cytoplasmic side of the membrane. Residues 451-471 (VFLGGFVPFSAVVLEWHQLYA) form a helical membrane-spanning segment. Over 472 to 482 (SLWGFKIYTSP) the chain is Lumenal. The helical transmembrane segment at 483-503 (GIMLFTFIVLIFLSSSVGIIL) threads the bilayer. Residues 504–518 (TYIQLSGEDHEWWWR) lie on the Cytoplasmic side of the membrane. A helical membrane pass occupies residues 519-539 (SILCGGFTAVFMYGYGVLFYL). The Lumenal segment spans residues 540–550 (RSDMTGFLQLS). Residues 551 to 571 (FYLGYTALLCYALFLVLGTIS) traverse the membrane as a helical segment. Residues 572 to 589 (FLASLMFIRHIYRSVKLE) are Cytoplasmic-facing. The Endoplasmic reticulum export signal motif lies at 578–583 (FIRHIY). Residues 587–589 (KLE) carry the Golgi retention signal motif.

The protein belongs to the nonaspanin (TM9SF) (TC 9.A.2) family. Expressed in the root cap and in giant cells.

Its subcellular location is the endosome membrane. It is found in the golgi apparatus membrane. This Arabidopsis thaliana (Mouse-ear cress) protein is Transmembrane 9 superfamily member 5.